The primary structure comprises 89 residues: Small ribosomal subunit protein uS15 (89 aa).

This sequence belongs to the universal ribosomal protein uS15 family. Part of the 30S ribosomal subunit. Forms a bridge to the 50S subunit in the 70S ribosome, contacting the 23S rRNA.

Its function is as follows. One of the primary rRNA binding proteins, it binds directly to 16S rRNA where it helps nucleate assembly of the platform of the 30S subunit by binding and bridging several RNA helices of the 16S rRNA. In terms of biological role, forms an intersubunit bridge (bridge B4) with the 23S rRNA of the 50S subunit in the ribosome. In Vibrio parahaemolyticus serotype O3:K6 (strain RIMD 2210633), this protein is Small ribosomal subunit protein uS15.